Reading from the N-terminus, the 659-residue chain is UvrABC system protein B (659 aa).

A Helicase ATP-binding domain is found at 27–414; that stretch reads EGLEQNKKSQ…AHGEIVKQII (388 aa). 40–47 serves as a coordination point for ATP; sequence GVTGSGKT. The Beta-hairpin signature appears at 93-116; sequence YFDYYRPEAYMPNTDTYIDKTTKS. Residues 432-594 enclose the Helicase C-terminal domain; sequence QVEDMFDEIQ…IIPKTIIKPI (163 aa). One can recognise a UVR domain in the interval 624–659; the sequence is EALVKDLRNQMLDASKQLNFERAAELRDIILELEAN.

The protein belongs to the UvrB family. In terms of assembly, forms a heterotetramer with UvrA during the search for lesions. Interacts with UvrC in an incision complex.

It localises to the cytoplasm. Functionally, the UvrABC repair system catalyzes the recognition and processing of DNA lesions. A damage recognition complex composed of 2 UvrA and 2 UvrB subunits scans DNA for abnormalities. Upon binding of the UvrA(2)B(2) complex to a putative damaged site, the DNA wraps around one UvrB monomer. DNA wrap is dependent on ATP binding by UvrB and probably causes local melting of the DNA helix, facilitating insertion of UvrB beta-hairpin between the DNA strands. Then UvrB probes one DNA strand for the presence of a lesion. If a lesion is found the UvrA subunits dissociate and the UvrB-DNA preincision complex is formed. This complex is subsequently bound by UvrC and the second UvrB is released. If no lesion is found, the DNA wraps around the other UvrB subunit that will check the other stand for damage. The chain is UvrABC system protein B from Mycoplasma mobile (strain ATCC 43663 / 163K / NCTC 11711) (Mesomycoplasma mobile).